Here is a 314-residue protein sequence, read N- to C-terminus: Methionyl-tRNA formyltransferase (314 aa).

112–115 is a (6S)-5,6,7,8-tetrahydrofolate binding site; it reads SLLP.

Belongs to the Fmt family.

It catalyses the reaction L-methionyl-tRNA(fMet) + (6R)-10-formyltetrahydrofolate = N-formyl-L-methionyl-tRNA(fMet) + (6S)-5,6,7,8-tetrahydrofolate + H(+). In terms of biological role, attaches a formyl group to the free amino group of methionyl-tRNA(fMet). The formyl group appears to play a dual role in the initiator identity of N-formylmethionyl-tRNA by promoting its recognition by IF2 and preventing the misappropriation of this tRNA by the elongation apparatus. In Legionella pneumophila (strain Corby), this protein is Methionyl-tRNA formyltransferase.